The primary structure comprises 282 residues: L-allo-isoleucyltransferase (282 aa).

Cysteine 105 functions as the Acyl-thioester intermediate in the catalytic mechanism. Residues 169–261 enclose the AB hydrolase-1 domain; that stretch reads HTQSTYTPSD…DGQHHDFVDG (93 aa).

This sequence belongs to the AB hydrolase superfamily.

It carries out the reaction holo-[CmaD peptidyl-carrier protein] + L-alloisoleucyl-[CmaA peptidyl-carrier protein] = L-alloisoleucyl-[CmaD peptidyl-carrier protein] + holo-[CmaA peptidyl-carrier protein]. Involved in the biosynthesis of the phytotoxin coronatine (COR). Catalyzes the transfer of the aminoacyl group covalently attached to the pantetheinyl arm of CmaA to the holo-pantetheinyl arm of CmaD. During the shuttling process, CmaE generates a covalent-aminoacyl-S-Cys enzyme intermediate by the action of its donor substrate L-aminoacyl-S-CmaA and delivers it to the sulfhydryl group attached to the phosphopantetheinyl arm on CmaD. In Pseudomonas savastanoi pv. glycinea (Pseudomonas syringae pv. glycinea), this protein is L-allo-isoleucyltransferase.